We begin with the raw amino-acid sequence, 135 residues long: Small ribosomal subunit protein bS6 (135 aa).

Residues 96-135 (HAEGPSIQMQKRDERERGDRGDRSDRGDRGDRGDRGGFRR) form a disordered region. Over residues 105-135 (QKRDERERGDRGDRSDRGDRGDRGDRGGFRR) the composition is skewed to basic and acidic residues.

It belongs to the bacterial ribosomal protein bS6 family.

In terms of biological role, binds together with bS18 to 16S ribosomal RNA. In Cereibacter sphaeroides (strain ATCC 17029 / ATH 2.4.9) (Rhodobacter sphaeroides), this protein is Small ribosomal subunit protein bS6.